Here is a 136-residue protein sequence, read N- to C-terminus: Large ribosomal subunit protein uL13 (136 aa).

It belongs to the universal ribosomal protein uL13 family. In terms of assembly, part of the 50S ribosomal subunit.

In terms of biological role, this protein is one of the early assembly proteins of the 50S ribosomal subunit, although it is not seen to bind rRNA by itself. It is important during the early stages of 50S assembly. The sequence is that of Large ribosomal subunit protein uL13 from Thermoplasma volcanium (strain ATCC 51530 / DSM 4299 / JCM 9571 / NBRC 15438 / GSS1).